A 732-amino-acid polypeptide reads, in one-letter code: MDPSADTWDLFSPLISLWINRFYIYLGFAVSISLWICVQIVIKTQGKNLQEKSVPKAAQDLMTNGYVSLQEKDIFVSGVKIFYGSQTGTAKGFATVLAEAVTSLDLPVAIINLKEYDPDDHLIEEVTSKNVCVFLVATYTDGLPTESAEWFCKWLEEASIDFRFGKTYLKGMRYAVFGLGNSAYASHFNKVGKNVDKWLWMLGAHRVMSRGEGDCDVVKSKHGSIEADFRAWKTKFISQLQALQKGERKKSCGGHCKKGKCESHQHGSEEREEGSHEQDELHHRDTEEEEPFESSSEEEFGGEDHQSLNSIVDVEDLGKIMDHVKKEKREKEQQEEKSGLFRNMGRNEDGERRAMITPALREALTKQGYQLIGSHSGVKLCRWTKSMLRGRGGCYKHTFYGIESHRCMETTPSLACANKCVFCWRHHTNPVGTEWRWKMDQPEMILKEAIENHQNMIKQFKGVPGVKAERFEEGMTVKHCALSLVGEPIMYPEINRFLKLLHQCKISSFLVTNAQFPAEIRNLEPVTQLYVSVDASTKDSLKKIDRPLFKDFWQRFLDSLKALAVKQQRTVYRLTLVKAWNVDELQAYAQLVSLGNPDFIEVKGVTYCGESSASSLTMAHVPWHEEVVQFVHELVDLIPEYEIACEHEHSNCLLIAHRKFKIGGEWWTWIDYNRFQELIQEYEDSGGSKTFSAKDYMARTPHWALFGASERGFDPKDTRHQRKNKSKAISGC.

Residues 79–237 enclose the Flavodoxin-like domain; it reads VKIFYGSQTG…DFRAWKTKFI (159 aa). FMN is bound by residues 85–89 and 176–208; these read SQTGT and VFGL…HRVM. The disordered stretch occupies residues 248–314; that stretch reads RKKSCGGHCK…HQSLNSIVDV (67 aa). Over residues 259–286 the composition is skewed to basic and acidic residues; the sequence is GKCESHQHGSEEREEGSHEQDELHHRDT. Acidic residues predominate over residues 287–301; sequence EEEEPFESSSEEEFG. The Radical SAM core domain occupies 400-644; sequence YGIESHRCME…VDLIPEYEIA (245 aa). [4Fe-4S] cluster contacts are provided by C416, C420, and C423.

Belongs to the TYW1 family. Requires [4Fe-4S] cluster as cofactor.

It carries out the reaction N(1)-methylguanosine(37) in tRNA(Phe) + pyruvate + S-adenosyl-L-methionine = 4-demethylwyosine(37) in tRNA(Phe) + 5'-deoxyadenosine + L-methionine + CO2 + H2O. It functions in the pathway tRNA modification; wybutosine-tRNA(Phe) biosynthesis. In terms of biological role, probable component of the wybutosine biosynthesis pathway. Wybutosine is a hyper modified guanosine with a tricyclic base found at the 3'-position adjacent to the anticodon of eukaryotic phenylalanine tRNA. Catalyzes the condensation of N-methylguanine with 2 carbon atoms from pyruvate to form the tricyclic 4-demethylwyosine, an intermediate in wybutosine biosynthesis. The chain is S-adenosyl-L-methionine-dependent tRNA 4-demethylwyosine synthase TYW1 (TYW1) from Homo sapiens (Human).